Here is a 294-residue protein sequence, read N- to C-terminus: tRNA dimethylallyltransferase (294 aa).

9–16 (GPTASGKS) is a binding site for ATP. 11–16 (TASGKS) contacts substrate. The interaction with substrate tRNA stretch occupies residues 155–159 (QRVIR).

It belongs to the IPP transferase family. In terms of assembly, monomer. Requires Mg(2+) as cofactor.

The enzyme catalyses adenosine(37) in tRNA + dimethylallyl diphosphate = N(6)-dimethylallyladenosine(37) in tRNA + diphosphate. Functionally, catalyzes the transfer of a dimethylallyl group onto the adenine at position 37 in tRNAs that read codons beginning with uridine, leading to the formation of N6-(dimethylallyl)adenosine (i(6)A). The chain is tRNA dimethylallyltransferase from Leuconostoc citreum (strain KM20).